A 105-amino-acid polypeptide reads, in one-letter code: Putative pterin-4-alpha-carbinolamine dehydratase (105 aa).

The protein belongs to the pterin-4-alpha-carbinolamine dehydratase family.

The catalysed reaction is (4aS,6R)-4a-hydroxy-L-erythro-5,6,7,8-tetrahydrobiopterin = (6R)-L-erythro-6,7-dihydrobiopterin + H2O. This Sinorhizobium medicae (strain WSM419) (Ensifer medicae) protein is Putative pterin-4-alpha-carbinolamine dehydratase.